The primary structure comprises 559 residues: Protein aurora borealis (559 aa).

Residues 1 to 27 are disordered; that stretch reads MGDVKESKMQITPETPGRIPVLNPFES. 5 positions are modified to phosphoserine: Ser183, Ser191, Ser270, Ser325, and Ser331. Thr354 is subject to Phosphothreonine.

The protein belongs to the BORA family. Interacts with AURKA. Phosphorylated by AURKA.

Required for the activation of AURKA at the onset of mitosis. The protein is Protein aurora borealis (BORA) of Homo sapiens (Human).